We begin with the raw amino-acid sequence, 192 residues long: dTTP/UTP pyrophosphatase (192 aa).

Catalysis depends on D68, which acts as the Proton acceptor.

It belongs to the Maf family. YhdE subfamily. A divalent metal cation serves as cofactor.

It localises to the cytoplasm. It catalyses the reaction dTTP + H2O = dTMP + diphosphate + H(+). The catalysed reaction is UTP + H2O = UMP + diphosphate + H(+). Functionally, nucleoside triphosphate pyrophosphatase that hydrolyzes dTTP and UTP. May have a dual role in cell division arrest and in preventing the incorporation of modified nucleotides into cellular nucleic acids. The sequence is that of dTTP/UTP pyrophosphatase from Cereibacter sphaeroides (strain ATCC 17023 / DSM 158 / JCM 6121 / CCUG 31486 / LMG 2827 / NBRC 12203 / NCIMB 8253 / ATH 2.4.1.) (Rhodobacter sphaeroides).